The sequence spans 646 residues: Lamin-1 (646 aa).

Residues 1–85 (MAEKAGEAGV…GSRATSPTSF (85 aa)) form a head region. A disordered region spans residues 1–94 (MAEKAGEAGV…FSRAQEKEEL (94 aa)). Polar residues-rich tracts occupy residues 48–67 (ATPS…SMSL) and 75–87 (QGSR…SFSR). Positions 86-126 (SRAQEKEELQNLNDRLAKILNKLNDSEEENRTLKIRLTTVQ) are coil 1A. The region spanning 90-446 (EKEELQNLND…KLLSDEEIRL (357 aa)) is the IF rod domain. A linker 1 region spans residues 127–137 (QETSADLNDQI). The segment at 138-281 (GKYRDELERA…SKLQRQSLSV (144 aa)) is coil 1B. Over residues 281–301 (VTTVDHHSAQSTSRRSGSDFS) the composition is skewed to polar residues. A disordered region spans residues 281-304 (VTTVDHHSAQSTSRRSGSDFSASV). The segment at 282–299 (TTVDHHSAQSTSRRSGSD) is linker 2. The coil 2 stretch occupies residues 300 to 439 (FSASVEDMRS…TELEMYNKLL (140 aa)). Residues 440 to 646 (SDEEIRLGIT…GKGILGFFGL (207 aa)) are tail. The short motif at 457-471 (VRHGAKKRKLTETFY) is the Nuclear localization signal element. Residues 476–487 (GSRSSAGSRSAG) show a composition bias toward low complexity. The disordered stretch occupies residues 476 to 513 (GSRSSAGSRSAGHNSTPVTKSQVTRTTVKTSENKSKAS). Polar residues predominate over residues 488 to 505 (HNSTPVTKSQVTRTTVKT). Positions 504–618 (KTSENKSKAS…NQMATYEVSA (115 aa)) constitute an LTD domain.

This sequence belongs to the intermediate filament family.

The protein resides in the nucleus. Its function is as follows. Intermediate filament (IF) protein, component of the nuclear lamina, a fibrous layer on the nucleoplasmic side of the inner nuclear membrane, which is thought to provide a framework for the nuclear envelope. The sequence is that of Lamin-1 from Hypsibius exemplaris (Freshwater tardigrade).